The following is a 603-amino-acid chain: Geraniol synthase, chloroplastic (603 aa).

Residues 1–50 constitute a chloroplast transit peptide; it reads MALQMIAPFLSSFLPNPRHSLAAHGLTHQKCVSKHISCSTTTPTYSTTVP. The (2E)-geranyl diphosphate site is built by Arg-301, Asp-338, Asp-342, Arg-479, and Asp-482. 2 residues coordinate Mg(2+): Asp-338 and Asp-342. The short motif at 338 to 342 is the DDXXD motif element; the sequence is DDIYD. Positions 482, 486, and 490 each coordinate Mg(2+).

The protein belongs to the terpene synthase family. Tpsb subfamily. In terms of assembly, homodimer. The cofactor is Mg(2+). Mn(2+) is required as a cofactor. As to expression, expressed in the oil cells of the leaves.

Its subcellular location is the plastid. It is found in the chloroplast. It carries out the reaction (2E)-geranyl diphosphate + H2O = (2E)-geraniol + diphosphate. Its pathway is secondary metabolite biosynthesis; terpenoid biosynthesis. Monoterpene synthase that catalyzes the formation of geraniol from geranyl diphosphate. In Cinnamomum tenuipile (Alseodaphne mollis), this protein is Geraniol synthase, chloroplastic (GerS).